The primary structure comprises 126 residues: Anti-adapter protein IraD (126 aa).

Belongs to the GpW/Gp25 family. IraD subfamily. As to quaternary structure, interacts with RssB.

The protein resides in the cytoplasm. Functionally, inhibits RpoS proteolysis by regulating RssB activity, thereby increasing the stability of the sigma stress factor RpoS during oxidative stress. Its effect on RpoS stability is due to its interaction with RssB, which probably blocks the interaction of RssB with RpoS, and the consequent delivery of the RssB-RpoS complex to the ClpXP protein degradation pathway. The protein is Anti-adapter protein IraD of Salmonella enteritidis PT4 (strain P125109).